The primary structure comprises 245 residues: Ribonuclease PH (245 aa).

Residues Arg-93 and 131 to 133 each bind phosphate; that span reads GTR.

This sequence belongs to the RNase PH family. Homohexameric ring arranged as a trimer of dimers.

The enzyme catalyses tRNA(n+1) + phosphate = tRNA(n) + a ribonucleoside 5'-diphosphate. Functionally, phosphorolytic 3'-5' exoribonuclease that plays an important role in tRNA 3'-end maturation. Removes nucleotide residues following the 3'-CCA terminus of tRNAs; can also add nucleotides to the ends of RNA molecules by using nucleoside diphosphates as substrates, but this may not be physiologically important. Probably plays a role in initiation of 16S rRNA degradation (leading to ribosome degradation) during starvation. In Corynebacterium glutamicum (strain ATCC 13032 / DSM 20300 / JCM 1318 / BCRC 11384 / CCUG 27702 / LMG 3730 / NBRC 12168 / NCIMB 10025 / NRRL B-2784 / 534), this protein is Ribonuclease PH.